The chain runs to 635 residues: Nuclear distribution protein nudE homolog 1 (635 aa).

Residues 14-192 (EKEIKHWKSK…TILRDLVTRS (179 aa)) adopt a coiled-coil conformation. 5 disordered regions span residues 35–63 (ESSLQDFVESSKELEQEMEKELSASNKTI), 200–267 (TMAS…LSRD), 279–328 (VLDD…SARA), 389–504 (SRVV…DHDP), and 516–635 (AAQA…TETF). The segment covering 43–56 (ESSKELEQEMEKEL) has biased composition (basic and acidic residues). Composition is skewed to polar residues over residues 201–224 (MASSTYDDSTAPRSEQSFDSSPIK) and 237–246 (SRQALSSPVT). Residues 280-299 (LDDSPTATTTSAAPTRSSTL) are compositionally biased toward low complexity. 2 stretches are compositionally biased toward polar residues: residues 314-326 (ASTSHGLTSSPSA) and 411-428 (GSPSANGHNSIHMPTSTP). Low complexity predominate over residues 516–541 (AAQASVAKRRTSMSGSGMSHSASHGS). 2 stretches are compositionally biased toward polar residues: residues 547–571 (SGSTLPRSTTPSTVAAPRVTQSSMT) and 580–619 (SKRTPLSTRLASSHRNASSARGSINGPPSSWKTSAMPAQT). Residues 620–635 (LSRSRSSSLGSETETF) are compositionally biased toward low complexity.

This sequence belongs to the nudE family. As to quaternary structure, self-associates. Interacts with PAC1.

The protein localises to the cytoplasm. It is found in the cytoskeleton. Required for nuclear migration. This is Nuclear distribution protein nudE homolog 1 (NDE1) from Mycosarcoma maydis (Corn smut fungus).